A 366-amino-acid polypeptide reads, in one-letter code: Carbamoyl phosphate synthase small chain (366 aa).

Residues 1-171 are CPSase; it reads MLERRYLVLE…KTPYVSTGSD (171 aa). L-glutamine contacts are provided by Ser47, Gly221, and Gly223. The Glutamine amidotransferase type-1 domain maps to 173–360; the sequence is SVVLLDFGKK…MTMMKEFKEK (188 aa). The Nucleophile role is filled by Cys248. Positions 249, 252, 290, 292, and 293 each coordinate L-glutamine. Active-site residues include His333 and Glu335.

This sequence belongs to the CarA family. Composed of two chains; the small (or glutamine) chain promotes the hydrolysis of glutamine to ammonia, which is used by the large (or ammonia) chain to synthesize carbamoyl phosphate. Tetramer of heterodimers (alpha,beta)4.

The enzyme catalyses hydrogencarbonate + L-glutamine + 2 ATP + H2O = carbamoyl phosphate + L-glutamate + 2 ADP + phosphate + 2 H(+). It carries out the reaction L-glutamine + H2O = L-glutamate + NH4(+). Its pathway is amino-acid biosynthesis; L-arginine biosynthesis; carbamoyl phosphate from bicarbonate: step 1/1. It functions in the pathway pyrimidine metabolism; UMP biosynthesis via de novo pathway; (S)-dihydroorotate from bicarbonate: step 1/3. Functionally, small subunit of the glutamine-dependent carbamoyl phosphate synthetase (CPSase). CPSase catalyzes the formation of carbamoyl phosphate from the ammonia moiety of glutamine, carbonate, and phosphate donated by ATP, constituting the first step of 2 biosynthetic pathways, one leading to arginine and/or urea and the other to pyrimidine nucleotides. The small subunit (glutamine amidotransferase) binds and cleaves glutamine to supply the large subunit with the substrate ammonia. This is Carbamoyl phosphate synthase small chain from Staphylococcus haemolyticus (strain JCSC1435).